The following is a 221-amino-acid chain: Guanylate kinase (221 aa).

The Guanylate kinase-like domain maps to 20–199; sequence GLMFILSSPS…CFGKVREILA (180 aa). 27 to 34 is a binding site for ATP; it reads SPSGAGKT.

The protein belongs to the guanylate kinase family.

The protein resides in the cytoplasm. It catalyses the reaction GMP + ATP = GDP + ADP. In terms of biological role, essential for recycling GMP and indirectly, cGMP. This is Guanylate kinase from Novosphingobium aromaticivorans (strain ATCC 700278 / DSM 12444 / CCUG 56034 / CIP 105152 / NBRC 16084 / F199).